The chain runs to 282 residues: Large ribosomal subunit protein uL2 (282 aa).

Residues 230–282 are disordered; sequence AMNPIDHPLGGGEGRSSGGRHPVSPWGMPAKGYKTRDKKKASSRLIVKRRGQK. Basic residues predominate over residues 265-282; it reads RDKKKASSRLIVKRRGQK.

It belongs to the universal ribosomal protein uL2 family. Part of the 50S ribosomal subunit. Forms a bridge to the 30S subunit in the 70S ribosome.

Its function is as follows. One of the primary rRNA binding proteins. Required for association of the 30S and 50S subunits to form the 70S ribosome, for tRNA binding and peptide bond formation. It has been suggested to have peptidyltransferase activity; this is somewhat controversial. Makes several contacts with the 16S rRNA in the 70S ribosome. This Desulfovibrio desulfuricans (strain ATCC 27774 / DSM 6949 / MB) protein is Large ribosomal subunit protein uL2.